Here is a 433-residue protein sequence, read N- to C-terminus: Trigger factor (433 aa).

Positions 163–248 (GDFVTFDFKG…IKEIKVKELP (86 aa)) constitute a PPIase FKBP-type domain.

This sequence belongs to the FKBP-type PPIase family. Tig subfamily.

The protein resides in the cytoplasm. The enzyme catalyses [protein]-peptidylproline (omega=180) = [protein]-peptidylproline (omega=0). Functionally, involved in protein export. Acts as a chaperone by maintaining the newly synthesized protein in an open conformation. Functions as a peptidyl-prolyl cis-trans isomerase. The sequence is that of Trigger factor from Geotalea uraniireducens (strain Rf4) (Geobacter uraniireducens).